Here is a 283-residue protein sequence, read N- to C-terminus: Transcription factor bHLH104 (283 aa).

Residues 96–134 (VEINSGSSGGAVKEEQEHLDDDCSRKRARTGSCSRGGGT) are disordered. Residues 107–120 (VKEEQEHLDDDCSR) are compositionally biased toward basic and acidic residues. A bHLH domain is found at 130–181 (RGGGTKACRERLRREKLNERFMDLSSVLEPGRTPKTDKPAILDDAIRILNQL).

As to quaternary structure, homodimer. Interacts with BTS and BHLH47/PYE.

Its subcellular location is the nucleus. This is Transcription factor bHLH104 (BHLH104) from Arabidopsis thaliana (Mouse-ear cress).